The following is a 354-amino-acid chain: Protein-glutamate methylesterase/protein-glutamine glutaminase (354 aa).

In terms of domain architecture, Response regulatory spans 6-123 (RVLIVDDSAV…SQSLETLSAA (118 aa)). Aspartate 57 carries the post-translational modification 4-aspartylphosphate. Residues 159–351 (ARTTHQLLAV…GDLLKQLQTR (193 aa)) enclose the CheB-type methylesterase domain. Catalysis depends on residues serine 171, histidine 197, and aspartate 293.

This sequence belongs to the CheB family. Phosphorylated by CheA. Phosphorylation of the N-terminal regulatory domain activates the methylesterase activity.

The protein resides in the cytoplasm. The enzyme catalyses [protein]-L-glutamate 5-O-methyl ester + H2O = L-glutamyl-[protein] + methanol + H(+). It carries out the reaction L-glutaminyl-[protein] + H2O = L-glutamyl-[protein] + NH4(+). Involved in chemotaxis. Part of a chemotaxis signal transduction system that modulates chemotaxis in response to various stimuli. Catalyzes the demethylation of specific methylglutamate residues introduced into the chemoreceptors (methyl-accepting chemotaxis proteins or MCP) by CheR. Also mediates the irreversible deamidation of specific glutamine residues to glutamic acid. In Bdellovibrio bacteriovorus (strain ATCC 15356 / DSM 50701 / NCIMB 9529 / HD100), this protein is Protein-glutamate methylesterase/protein-glutamine glutaminase.